Consider the following 235-residue polypeptide: Ribonuclease S-2 (235 aa).

Positions 1-31 (MATVQKSQHSHFFLLVGCIVHLSNFCSTTTA) are cleaved as a signal peptide. An RNA-binding site is contributed by Gln-41. Cys-47 and Cys-54 form a disulfide bridge. RNA is bound at residue His-66. Residue His-66 is the Proton donor of the active site. N-linked (GlcNAc...) asparagine glycosylation occurs at Asn-72. Cystine bridges form between Cys-80-Cys-129, Cys-189-Cys-217, and Cys-200-Cys-211. Residues 105–106 (DL), Arg-108, and Phe-118 contribute to the RNA site. Residue Gln-122 is part of the active site. 125–126 (KH) contacts RNA. His-126 acts as the Proton acceptor in catalysis.

The protein belongs to the RNase T2 family.

Its subcellular location is the secreted. The protein localises to the extracellular space. The catalysed reaction is a ribonucleotidyl-ribonucleotide-RNA + H2O = a 3'-end 3'-phospho-ribonucleotide-RNA + a 5'-end dephospho-ribonucleoside-RNA + H(+). In terms of biological role, self-incompatibility (SI) is the inherited ability of a flowering plant to prevent self-fertilization by discriminating between self and non-self pollen during pollination. In many species, self-incompatibility is controlled by the single, multiallelic locus S. This is Ribonuclease S-2 (S2) from Antirrhinum hispanicum (Snapdragon).